We begin with the raw amino-acid sequence, 318 residues long: Aspartate carbamoyltransferase catalytic subunit (318 aa).

Carbamoyl phosphate-binding residues include Arg-55 and Thr-56. An L-aspartate-binding site is contributed by Lys-83. Positions 105, 138, and 141 each coordinate carbamoyl phosphate. L-aspartate contacts are provided by Arg-171 and Arg-225. 2 residues coordinate carbamoyl phosphate: Gly-266 and Pro-267.

This sequence belongs to the aspartate/ornithine carbamoyltransferase superfamily. ATCase family. In terms of assembly, heterododecamer (2C3:3R2) of six catalytic PyrB chains organized as two trimers (C3), and six regulatory PyrI chains organized as three dimers (R2).

The catalysed reaction is carbamoyl phosphate + L-aspartate = N-carbamoyl-L-aspartate + phosphate + H(+). It functions in the pathway pyrimidine metabolism; UMP biosynthesis via de novo pathway; (S)-dihydroorotate from bicarbonate: step 2/3. Its function is as follows. Catalyzes the condensation of carbamoyl phosphate and aspartate to form carbamoyl aspartate and inorganic phosphate, the committed step in the de novo pyrimidine nucleotide biosynthesis pathway. The protein is Aspartate carbamoyltransferase catalytic subunit of Corynebacterium kroppenstedtii (strain DSM 44385 / JCM 11950 / CIP 105744 / CCUG 35717).